The sequence spans 126 residues: Holo-[acyl-carrier-protein] synthase (126 aa).

D8 and E56 together coordinate Mg(2+).

The protein belongs to the P-Pant transferase superfamily. AcpS family. The cofactor is Mg(2+).

The protein resides in the cytoplasm. The enzyme catalyses apo-[ACP] + CoA = holo-[ACP] + adenosine 3',5'-bisphosphate + H(+). Its function is as follows. Transfers the 4'-phosphopantetheine moiety from coenzyme A to a Ser of acyl-carrier-protein. This is Holo-[acyl-carrier-protein] synthase from Clostridium tetani (strain Massachusetts / E88).